The chain runs to 1241 residues: High-affinity potassium transport protein (1241 aa).

2 helical membrane passes run 49-70 (NFIA…ILLY) and 78-98 (IDAL…TVDV). N100 is a glycosylation site (N-linked (GlcNAc...) asparagine). The chain crosses the membrane as a helical span at residues 107 to 127 (IILYIICCISTPIAVHSCLAF). 3 disordered regions span residues 162–241 (TART…SLDD), 253–316 (KYHG…TPED), and 329–570 (EGTA…QLQQ). Residues 164–177 (RTMTKSKTGGTQRV) show a composition bias toward polar residues. 2 stretches are compositionally biased toward basic and acidic residues: residues 181-191 (GKSDKRDDFQE) and 199-214 (VNRD…HNSR). Over residues 215-238 (DSNSNANTNSSNNNSINHNGSSGS) the composition is skewed to low complexity. N223, N227, N233, N257, N274, N353, and N364 each carry an N-linked (GlcNAc...) asparagine glycan. Composition is skewed to polar residues over residues 268-280 (NTAT…QKLK) and 345-365 (TDGT…TMNE). A compositionally biased stretch (basic and acidic residues) spans 366 to 375 (SKIRIQDKGA). Residues 380-411 (DQDSVLHSSNSSACTSDEDSLPTNFGGTTPSL) are compositionally biased toward polar residues. N-linked (GlcNAc...) asparagine glycosylation is found at N389 and N442. 2 stretches are compositionally biased toward basic residues: residues 446 to 455 (PPRKASKSKR) and 482 to 497 (HLPK…KRRL). Residues 498-509 (STGSIDKNSSSD) show a composition bias toward polar residues. 2 N-linked (GlcNAc...) asparagine glycosylation sites follow: N505 and N538. The span at 520–545 (NDDDDGNEGDNMEEYFADNESGDEDD) shows a compositional bias: acidic residues. Positions 561–570 (KQQQQHQLQQ) are enriched in low complexity. Residues N584, N660, N681, N691, and N741 are each glycosylated (N-linked (GlcNAc...) asparagine). A disordered region spans residues 677–714 (NSHRNGSEDVSSDSNETTYPLNGNNDHSQNDANGYPTY). Residues 684–708 (EDVSSDSNETTYPLNGNNDHSQNDA) show a composition bias toward polar residues. 5 helical membrane passes run 784–806 (ILVV…WINL), 819–840 (VSPT…GLTL), 844–864 (SMMS…FIII), 868–888 (GFPI…PDLS), and 904–924 (CFTL…LVGL). N925 carries N-linked (GlcNAc...) asparagine glycosylation. Helical transmembrane passes span 929–949 (WILF…SKGY) and 977–997 (SIQV…AISI). The segment at 1011-1073 (YGEMGGKPED…ENENPNEEST (63 aa)) is disordered. Over residues 1021–1041 (TDTEEDGDCDDEDDDNEEEES) the composition is skewed to acidic residues. The segment covering 1050–1062 (GKSKKETKKKKKR) has biased composition (basic residues). 2 helical membrane passes run 1084–1104 (QLSF…ICER) and 1117–1137 (VFTI…SLGY). A glycan (N-linked (GlcNAc...) asparagine) is linked at N1141. Residues 1222–1241 (DELKHKRSLSRSSKRSTKTN) form a disordered region. A compositionally biased stretch (basic residues) spans 1226–1241 (HKRSLSRSSKRSTKTN).

It belongs to the TrkH potassium transport family.

Its subcellular location is the membrane. In terms of biological role, this protein is required for high-affinity potassium transport. The protein is High-affinity potassium transport protein (TRK1) of Saccharomyces uvarum (Yeast).